A 176-amino-acid polypeptide reads, in one-letter code: Ribosome maturation factor RimM (176 aa).

In terms of domain architecture, PRC barrel spans 94–176 (KDEFFYFEIL…RFGFEILQNS (83 aa)).

This sequence belongs to the RimM family. Binds ribosomal protein uS19.

It localises to the cytoplasm. An accessory protein needed during the final step in the assembly of 30S ribosomal subunit, possibly for assembly of the head region. Essential for efficient processing of 16S rRNA. May be needed both before and after RbfA during the maturation of 16S rRNA. It has affinity for free ribosomal 30S subunits but not for 70S ribosomes. The chain is Ribosome maturation factor RimM from Campylobacter hominis (strain ATCC BAA-381 / DSM 21671 / CCUG 45161 / LMG 19568 / NCTC 13146 / CH001A).